We begin with the raw amino-acid sequence, 363 residues long: METRFGASPPYTVGVEEEFQLIDPRTRALTPKIEEVLAAGDGELPEGTLASELSASCLEVRTPAYASVAELARALPALRARVRRLAERSGARLVSAGAHPFSPAAEQPITGKPRYRKVDEEMGWPARMQAIYGLHVHVAVPGGEEAVRAVSALARHVPLFIALSANSPFWEGRDTRLASVRAKVFGLIPRSGLPPRFASWEEFVRHVERLVRAGSIRDYTFCWWDVRPHPKLGTVELRAPDAQTDPGRTAALAALCQCLAAAAEEFEPEDPLLTEENKWRATRHGLEAELYDFSGQRTVAARRAAEELVGRLLPVARELGCEAELEGVLEISRSATGADRQRAVLAREGSLKSVVDYLAEATA.

Belongs to the glutamate--cysteine ligase type 2 family. YbdK subfamily.

The enzyme catalyses L-cysteine + L-glutamate + ATP = gamma-L-glutamyl-L-cysteine + ADP + phosphate + H(+). In terms of biological role, ATP-dependent carboxylate-amine ligase which exhibits weak glutamate--cysteine ligase activity. The protein is Putative glutamate--cysteine ligase 2-3 of Rubrobacter xylanophilus (strain DSM 9941 / JCM 11954 / NBRC 16129 / PRD-1).